We begin with the raw amino-acid sequence, 1061 residues long: DNA polymerase (1061 aa).

Residues 773–792 (NSEAEESDEDQGPAPFYSPP) form a disordered region.

It belongs to the DNA polymerase type-B family. As to quaternary structure, heterodimer with the terminal protein; this heterodimer binds to bp 9 to 18 of the genome. Forms a complex with viral pTP, DBP and hosts NFIA and POU2F1/OCT1 for initiation of replication.

The protein resides in the host nucleus. The catalysed reaction is DNA(n) + a 2'-deoxyribonucleoside 5'-triphosphate = DNA(n+1) + diphosphate. Functionally, eukaryotic-type DNA polymerase involved in viral genomic replication. DNA synthesis is protein primed, and acts in a strand displacement replication. Assembles in complex with viral pTP, DBP, host NFIA and host POU2F1/OCT1 on viral origin of replication. The polymerase covalently transfers dCMP onto pTP, thereby initiating complementary strand synthesis. The sequence is that of DNA polymerase from Human adenovirus A serotype 12 (HAdV-12).